Consider the following 212-residue polypeptide: Octanoyltransferase (212 aa).

The 180-residue stretch at 33–212 (GTAPELVWLL…ATFPEVFGAD (180 aa)) folds into the BPL/LPL catalytic domain. Residues 72 to 79 (RGGQYTYH), 144 to 146 (AIG), and 157 to 159 (GIA) contribute to the substrate site. The active-site Acyl-thioester intermediate is the cysteine 175.

This sequence belongs to the LipB family.

The protein localises to the cytoplasm. The catalysed reaction is octanoyl-[ACP] + L-lysyl-[protein] = N(6)-octanoyl-L-lysyl-[protein] + holo-[ACP] + H(+). The protein operates within protein modification; protein lipoylation via endogenous pathway; protein N(6)-(lipoyl)lysine from octanoyl-[acyl-carrier-protein]: step 1/2. Catalyzes the transfer of endogenously produced octanoic acid from octanoyl-acyl-carrier-protein onto the lipoyl domains of lipoate-dependent enzymes. Lipoyl-ACP can also act as a substrate although octanoyl-ACP is likely to be the physiological substrate. This Paramagnetospirillum magneticum (strain ATCC 700264 / AMB-1) (Magnetospirillum magneticum) protein is Octanoyltransferase.